We begin with the raw amino-acid sequence, 186 residues long: Holliday junction branch migration complex subunit RuvA (186 aa).

The segment at 1–63 (MNDYINGLLH…DNVFKYYGFK (63 aa)) is domain I. The interval 64–137 (NQLIRDLFEL…QKELFNNKIS (74 aa)) is domain II. Position 137 (serine 137) is a region of interest, flexible linker. The interval 137–186 (SDKKNKVITSLEKLGYKTKDIYKIIINIDEDMNIEDLTKYVLEQLSYLHN) is domain III.

It belongs to the RuvA family. Homotetramer. Forms an RuvA(8)-RuvB(12)-Holliday junction (HJ) complex. HJ DNA is sandwiched between 2 RuvA tetramers; dsDNA enters through RuvA and exits via RuvB. An RuvB hexamer assembles on each DNA strand where it exits the tetramer. Each RuvB hexamer is contacted by two RuvA subunits (via domain III) on 2 adjacent RuvB subunits; this complex drives branch migration. In the full resolvosome a probable DNA-RuvA(4)-RuvB(12)-RuvC(2) complex forms which resolves the HJ.

Its subcellular location is the cytoplasm. The RuvA-RuvB-RuvC complex processes Holliday junction (HJ) DNA during genetic recombination and DNA repair, while the RuvA-RuvB complex plays an important role in the rescue of blocked DNA replication forks via replication fork reversal (RFR). RuvA specifically binds to HJ cruciform DNA, conferring on it an open structure. The RuvB hexamer acts as an ATP-dependent pump, pulling dsDNA into and through the RuvAB complex. HJ branch migration allows RuvC to scan DNA until it finds its consensus sequence, where it cleaves and resolves the cruciform DNA. The protein is Holliday junction branch migration complex subunit RuvA of Mycoplasma mycoides subsp. mycoides SC (strain CCUG 32753 / NCTC 10114 / PG1).